A 472-amino-acid polypeptide reads, in one-letter code: Probable low-salt glycan biosynthesis flippase Agl15 (472 aa).

The next 13 helical transmembrane spans lie at 8–28 (IKLF…ITFF), 38–58 (GVFF…DFGL), 77–97 (SSAI…IVVF), 109–129 (FAVY…AVSV), 164–184 (AEAL…WGLS), 209–229 (VVSS…IGIF), 244–264 (VTAI…PQVS), 289–309 (LVIP…GIVF), 315–335 (IASY…VHVI), 354–374 (VISV…FGIV), 375–395 (GAAV…AHYL), 408–428 (IGWC…FKTL), and 434–454 (LIQL…ITLL).

Belongs to the AglR/Agl15 family.

Its subcellular location is the cell membrane. Its pathway is protein modification; protein glycosylation. It functions in the pathway cell surface structure biogenesis; S-layer biogenesis. Its function is as follows. Flippase involved in N-glycan biosynthetic pathway that takes place under low-salt conditions (1.75 M instead of 3.4 M). Participates in the formation of the tetrasaccharide present at 'Asn-532' of S-layer glycoprotein Csg, consisting of a sulfated hexose, 2 hexoses and rhamnose. Probably moves the tetrasaccharide from the cytosolic to the extracytosolic side of the membrane. This chain is Probable low-salt glycan biosynthesis flippase Agl15 (agl15), found in Haloferax volcanii (strain ATCC 29605 / DSM 3757 / JCM 8879 / NBRC 14742 / NCIMB 2012 / VKM B-1768 / DS2) (Halobacterium volcanii).